The primary structure comprises 144 residues: Ribonuclease H (144 aa).

The RNase H type-1 domain occupies 1–141; it reads MKKVEIFTDG…ADRLASEAAD (141 aa). Positions 9, 47, 69, and 133 each coordinate Mg(2+).

The protein belongs to the RNase H family. Monomer. Mg(2+) is required as a cofactor.

The protein resides in the cytoplasm. It catalyses the reaction Endonucleolytic cleavage to 5'-phosphomonoester.. Endonuclease that specifically degrades the RNA of RNA-DNA hybrids. This is Ribonuclease H from Erythrobacter litoralis (strain HTCC2594).